Here is a 547-residue protein sequence, read N- to C-terminus: G protein-coupled receptor associated sorting protein 3 (547 aa).

Basic residues predominate over residues 1-10 (MAGTKNKTRA). Disordered stretches follow at residues 1 to 32 (MAGT…EATG) and 80 to 102 (TLGK…STCK).

This sequence belongs to the GPRASP family. In terms of assembly, homodimer. As to expression, highly expressed in brain. Not expressed in lung or liver. Down-regulated in brain from patients suffering from Alzheimer disease.

Its subcellular location is the cytoplasm. It localises to the nucleus. Functionally, survival and differentiation promoting protein that plays a role in the regulation of neurosynaptogenesis. Induces phosphatase PP2A activity which results in APP dephosphorylation and inhibits BACE1-mediated processing of APP. The chain is G protein-coupled receptor associated sorting protein 3 from Homo sapiens (Human).